Consider the following 271-residue polypeptide: Acyl-[acyl-carrier-protein]--UDP-N-acetylglucosamine O-acyltransferase (271 aa).

The protein belongs to the transferase hexapeptide repeat family. LpxA subfamily. As to quaternary structure, homotrimer.

It localises to the cytoplasm. The catalysed reaction is a (3R)-hydroxyacyl-[ACP] + UDP-N-acetyl-alpha-D-glucosamine = a UDP-3-O-[(3R)-3-hydroxyacyl]-N-acetyl-alpha-D-glucosamine + holo-[ACP]. The protein operates within glycolipid biosynthesis; lipid IV(A) biosynthesis; lipid IV(A) from (3R)-3-hydroxytetradecanoyl-[acyl-carrier-protein] and UDP-N-acetyl-alpha-D-glucosamine: step 1/6. Its function is as follows. Involved in the biosynthesis of lipid A, a phosphorylated glycolipid that anchors the lipopolysaccharide to the outer membrane of the cell. The protein is Acyl-[acyl-carrier-protein]--UDP-N-acetylglucosamine O-acyltransferase of Sulfurihydrogenibium sp. (strain YO3AOP1).